Consider the following 129-residue polypeptide: Small ribosomal subunit protein uS11 (129 aa).

Belongs to the universal ribosomal protein uS11 family. Part of the 30S ribosomal subunit. Interacts with proteins S7 and S18. Binds to IF-3.

Functionally, located on the platform of the 30S subunit, it bridges several disparate RNA helices of the 16S rRNA. Forms part of the Shine-Dalgarno cleft in the 70S ribosome. The protein is Small ribosomal subunit protein uS11 of Tolumonas auensis (strain DSM 9187 / NBRC 110442 / TA 4).